Here is a 436-residue protein sequence, read N- to C-terminus: APO protein 1, chloroplastic (436 aa).

The transit peptide at 1 to 47 (MLLVSPACRGVYLQTIDPKPIDFSARASYALCFQIPTSIPKRECLMR) directs the protein to the chloroplast. APO domains are found at residues 155-240 (ACSE…EIPE) and 329-414 (ACGY…RVPQ).

It belongs to the APO family. In terms of tissue distribution, expressed at low level. Expressed at higher level in leaves. Expressed at lower level in roots, stems, siliques and flowers.

Its subcellular location is the plastid. The protein localises to the chloroplast. Involved in the stable assembly of several 4Fe-4S cluster-containing complexes of chloroplasts. May participate in 4Fe-4S cofactor incorporation into psaA and/or psaB during translation. In Arabidopsis thaliana (Mouse-ear cress), this protein is APO protein 1, chloroplastic (APO1).